The sequence spans 550 residues: Hydroxylamine reductase (550 aa).

[2Fe-2S] cluster is bound by residues cysteine 3, cysteine 6, cysteine 18, and cysteine 25. Positions 249, 273, 317, 405, 433, 458, 492, and 494 each coordinate hybrid [4Fe-2O-2S] cluster. A Cysteine persulfide modification is found at cysteine 405.

The protein belongs to the HCP family. Requires [2Fe-2S] cluster as cofactor. Hybrid [4Fe-2O-2S] cluster is required as a cofactor.

It is found in the cytoplasm. It catalyses the reaction A + NH4(+) + H2O = hydroxylamine + AH2 + H(+). Its function is as follows. Catalyzes the reduction of hydroxylamine to form NH(3) and H(2)O. The chain is Hydroxylamine reductase from Salmonella paratyphi A (strain ATCC 9150 / SARB42).